We begin with the raw amino-acid sequence, 65 residues long: Large ribosomal subunit protein bL31 (65 aa).

Residues cysteine 16, cysteine 18, cysteine 36, and cysteine 39 each contribute to the Zn(2+) site.

The protein belongs to the bacterial ribosomal protein bL31 family. Type A subfamily. Part of the 50S ribosomal subunit. Zn(2+) serves as cofactor.

Binds the 23S rRNA. The sequence is that of Large ribosomal subunit protein bL31 from Geotalea daltonii (strain DSM 22248 / JCM 15807 / FRC-32) (Geobacter daltonii).